The chain runs to 298 residues: Junctional adhesion molecule B (298 aa).

Residues 1–28 form the signal peptide; it reads MARSPQGLLMLLLLHYLIVALDYHKANG. The Extracellular portion of the chain corresponds to 29-236; that stretch reads FSASKDHRQE…GKRMQVDVLN (208 aa). In terms of domain architecture, Ig-like V-type spans 32–128; the sequence is SKDHRQEVTV…GQNLQEDKVM (97 aa). 2 disulfide bridges follow: Cys-51–Cys-110 and Cys-156–Cys-214. Asn-99 carries N-linked (GlcNAc...) asparagine glycosylation. In terms of domain architecture, Ig-like C2-type spans 135–238; the sequence is PAVPACEVPT…RMQVDVLNIS (104 aa). A helical membrane pass occupies residues 237 to 257; that stretch reads ISGIIATVVVVAFVISVCGLG. Over 258–298 the chain is Cytoplasmic; the sequence is TCYAQRKGYFSKETSFQKGSPASKVTTMSENDFKHTKSFII.

Belongs to the immunoglobulin superfamily. Post-translationally, the expression in Sertoli cells is regulated by TGFB3 through ubiquitin-mediated proteasomal degradation. In terms of tissue distribution, expressed by bone marrow stromal cells (at protein level). Expressed in skin (at protein level). Expressed in testis by Sertoli cells (at protein level). Expressed by dorsal root ganglion and spinal cord neurons.

It localises to the cell membrane. It is found in the cell junction. The protein resides in the tight junction. Junctional adhesion protein that mediates heterotypic cell-cell interactions with its cognate receptor JAM3 to regulate different cellular processes. Plays a role in homing and mobilization of hematopoietic stem and progenitor cells within the bone marrow. At the surface of bone marrow stromal cells, it contributes to the retention of the hematopoietic stem and progenitor cells expressing JAM3. Plays a central role in leukocytes extravasation by facilitating not only transmigration but also tethering and rolling of leukocytes along the endothelium. Tethering and rolling of leukocytes are dependent on the binding by JAM2 of the integrin alpha-4/beta-1. Plays a role in spermatogenesis where JAM2 and JAM3, which are respectively expressed by Sertoli and germ cells, mediate an interaction between both cell types and play an essential role in the anchorage of germ cells onto Sertoli cells and the assembly of cell polarity complexes during spermatid differentiation. Also functions as an inhibitory somatodendritic cue that prevents the myelination of non-axonal parts of neurons. During myogenesis, it is involved in myocyte fusion. May also play a role in angiogenesis. The chain is Junctional adhesion molecule B from Mus musculus (Mouse).